A 255-amino-acid polypeptide reads, in one-letter code: tRNA (guanine-N(7)-)-methyltransferase (255 aa).

Positions 86, 111, 138, and 161 each coordinate S-adenosyl-L-methionine. Residue aspartate 161 is part of the active site. Residues lysine 165, aspartate 197, and 234–237 (TKFE) each bind substrate.

It belongs to the class I-like SAM-binding methyltransferase superfamily. TrmB family.

The catalysed reaction is guanosine(46) in tRNA + S-adenosyl-L-methionine = N(7)-methylguanosine(46) in tRNA + S-adenosyl-L-homocysteine. It participates in tRNA modification; N(7)-methylguanine-tRNA biosynthesis. In terms of biological role, catalyzes the formation of N(7)-methylguanine at position 46 (m7G46) in tRNA. The sequence is that of tRNA (guanine-N(7)-)-methyltransferase from Pasteurella multocida (strain Pm70).